We begin with the raw amino-acid sequence, 649 residues long: Putative calpain-like cysteine protease A (649 aa).

The propeptide occupies 1 to 3; it reads MLT. Disordered stretches follow at residues 1 to 22 and 124 to 193; these read MLTTESPTTTTTTTTTTTSSPS and PLSN…SMPA. Positions 15-123 constitute a C2 domain; sequence TTTTSSPSSD…LHANGEAKWY (109 aa). The span at 140-149 shows a compositional bias: low complexity; that stretch reads ITNSNNKDNN. Over residues 159 to 172 the composition is skewed to basic and acidic residues; the sequence is AQEKGDEDQHHSAD. Domain III stretches follow at residues 458 to 489 and 498 to 633; these read EGTYIVIPSTYDHGIEGAFHLTLFTDDKNATF and EVEQ…ISLD.

The protein belongs to the peptidase C2 family. Monomer. Undergoes autolytic cleavage between Pro-192 and Ala-193.

The protein localises to the cytoplasm. It is found in the cytosol. Its function is as follows. Has a weak caseinolytic activity. This is Putative calpain-like cysteine protease A (cplA) from Dictyostelium discoideum (Social amoeba).